The primary structure comprises 89 residues: Small ribosomal subunit protein uS15 (89 aa).

The protein belongs to the universal ribosomal protein uS15 family. In terms of assembly, part of the 30S ribosomal subunit. Forms a bridge to the 50S subunit in the 70S ribosome, contacting the 23S rRNA.

In terms of biological role, one of the primary rRNA binding proteins, it binds directly to 16S rRNA where it helps nucleate assembly of the platform of the 30S subunit by binding and bridging several RNA helices of the 16S rRNA. Functionally, forms an intersubunit bridge (bridge B4) with the 23S rRNA of the 50S subunit in the ribosome. This Rhizorhabdus wittichii (strain DSM 6014 / CCUG 31198 / JCM 15750 / NBRC 105917 / EY 4224 / RW1) (Sphingomonas wittichii) protein is Small ribosomal subunit protein uS15.